Here is a 429-residue protein sequence, read N- to C-terminus: Histidine--tRNA ligase (429 aa).

It belongs to the class-II aminoacyl-tRNA synthetase family. Homodimer.

The protein resides in the cytoplasm. The catalysed reaction is tRNA(His) + L-histidine + ATP = L-histidyl-tRNA(His) + AMP + diphosphate + H(+). In Streptococcus mutans serotype c (strain ATCC 700610 / UA159), this protein is Histidine--tRNA ligase.